A 387-amino-acid polypeptide reads, in one-letter code: MVFISETSDDGSNGGDPTKNPQEEEEENLPPIPQGIPDELIESTVLLIRRCHYPTLSLLSKTFRRVISSSELYKSRFILNLTDSVLYALIGFSPYNTTNLYILNCNIPRNISLHLREIKSLPPLNHGSAVVTIGYHMYVIGGHNRLHQPTSNVSIIDLRFHTSCSLPRMQRTRVYAAAGVIDGRIYVIGGCVKRNDHWIEVFDIENRIWSSVPHHRYCNGSSLRGEGFVTSVVMQNKIYILDSLFGFAYEPRHGTLQSLGFETQFMFLWRDPCCVIEGLLYCIDPMCVLGHAIVVYDPNELIWRRVKGAYILPKFCYYQCKMANFGGKLAILGCSNSSQRGLKDVWFVEIELENRQSGEIWGKVDSLAIVLRSVKSPSIDLFRSVTF.

Residues 1–34 (MVFISETSDDGSNGGDPTKNPQEEEEENLPPIPQ) are disordered. An F-box domain is found at 31-78 (PIPQGIPDELIESTVLLIRRCHYPTLSLLSKTFRRVISSSELYKSRFI). An LRR 1 repeat occupies 105 to 128 (CNIPRNISLHLREIKSLPPLNHGS). Kelch repeat units lie at residues 136 to 183 (HMYV…VIDG) and 184 to 231 (RIYV…FVTS). Residues 196–219 (DHWIEVFDIENRIWSSVPHHRYCN) form an LRR 2 repeat.

This chain is F-box/LRR-repeat/kelch-repeat protein At2g29770, found in Arabidopsis thaliana (Mouse-ear cress).